A 270-amino-acid chain; its full sequence is Formamidopyrimidine-DNA glycosylase (270 aa).

Catalysis depends on Pro2, which acts as the Schiff-base intermediate with DNA. Residue Glu3 is the Proton donor of the active site. The active-site Proton donor; for beta-elimination activity is the Lys58. The DNA site is built by His91, Arg110, and Arg151. An FPG-type zinc finger spans residues 236-270; the sequence is FVYGRGGQPCKVCGTELREVKLGQRASVYCPRCQR. The active-site Proton donor; for delta-elimination activity is Arg260.

This sequence belongs to the FPG family. As to quaternary structure, monomer. The cofactor is Zn(2+).

The catalysed reaction is Hydrolysis of DNA containing ring-opened 7-methylguanine residues, releasing 2,6-diamino-4-hydroxy-5-(N-methyl)formamidopyrimidine.. It carries out the reaction 2'-deoxyribonucleotide-(2'-deoxyribose 5'-phosphate)-2'-deoxyribonucleotide-DNA = a 3'-end 2'-deoxyribonucleotide-(2,3-dehydro-2,3-deoxyribose 5'-phosphate)-DNA + a 5'-end 5'-phospho-2'-deoxyribonucleoside-DNA + H(+). Its function is as follows. Involved in base excision repair of DNA damaged by oxidation or by mutagenic agents. Acts as a DNA glycosylase that recognizes and removes damaged bases. Has a preference for oxidized purines, such as 7,8-dihydro-8-oxoguanine (8-oxoG). Has AP (apurinic/apyrimidinic) lyase activity and introduces nicks in the DNA strand. Cleaves the DNA backbone by beta-delta elimination to generate a single-strand break at the site of the removed base with both 3'- and 5'-phosphates. This chain is Formamidopyrimidine-DNA glycosylase, found in Pseudomonas putida (strain ATCC 700007 / DSM 6899 / JCM 31910 / BCRC 17059 / LMG 24140 / F1).